The following is a 522-amino-acid chain: Peptide chain release factor 3 (522 aa).

Residues 10–277 (ASRKTFAIIS…TFVDFAPSPS (268 aa)) enclose the tr-type G domain. GTP is bound by residues 19–26 (SHPDAGKT), 87–91 (DTPGH), and 141–144 (NKMD).

This sequence belongs to the TRAFAC class translation factor GTPase superfamily. Classic translation factor GTPase family. PrfC subfamily.

It is found in the cytoplasm. Increases the formation of ribosomal termination complexes and stimulates activities of RF-1 and RF-2. It binds guanine nucleotides and has strong preference for UGA stop codons. It may interact directly with the ribosome. The stimulation of RF-1 and RF-2 is significantly reduced by GTP and GDP, but not by GMP. This chain is Peptide chain release factor 3, found in Listeria innocua serovar 6a (strain ATCC BAA-680 / CLIP 11262).